The chain runs to 357 residues: Sorbitol dehydrogenase 1 (357 aa).

A Zn(2+)-binding site is contributed by Cys-43. Tyr-49 is a substrate binding site. His-68 and Glu-69 together coordinate Zn(2+). Glu-154 contacts substrate. NAD(+)-binding positions include Asp-202, Lys-207, 275-277 (VGM), and 299-301 (CFR). Residues Arg-301 and Tyr-302 each coordinate substrate.

The protein belongs to the zinc-containing alcohol dehydrogenase family. In terms of assembly, homotetramer. The cofactor is Zn(2+).

The enzyme catalyses keto-D-fructose + NADH + H(+) = D-sorbitol + NAD(+). The catalysed reaction is xylitol + NAD(+) = D-xylulose + NADH + H(+). Its function is as follows. Polyol dehydrogenase that catalyzes the reversible NAD(+)-dependent oxidation of various sugar alcohols. Is active with D-sorbitol (D-glucitol) and xylitol as substrates, leading to the C2-oxidized product D-fructose and D-xylulose, respectively. Is likely involved in the utilization of D-sorbitol as a sole carbon source for growth. Has no activity on mannitol and primary alcohols such as ethanol. In Saccharomyces cerevisiae (strain ATCC 204508 / S288c) (Baker's yeast), this protein is Sorbitol dehydrogenase 1 (SOR1).